The following is a 637-amino-acid chain: Threonine--tRNA ligase (637 aa).

In terms of domain architecture, TGS spans 1-61 (MPNVKLPDGN…KEDCSLIIVT (61 aa)). Residues 242–533 (DHRKLGKALD…LIEHYAGKLP (292 aa)) form a catalytic region. Residues cysteine 333, histidine 384, and histidine 510 each contribute to the Zn(2+) site.

It belongs to the class-II aminoacyl-tRNA synthetase family. Homodimer. The cofactor is Zn(2+).

It localises to the cytoplasm. It catalyses the reaction tRNA(Thr) + L-threonine + ATP = L-threonyl-tRNA(Thr) + AMP + diphosphate + H(+). In terms of biological role, catalyzes the attachment of threonine to tRNA(Thr) in a two-step reaction: L-threonine is first activated by ATP to form Thr-AMP and then transferred to the acceptor end of tRNA(Thr). Also edits incorrectly charged L-seryl-tRNA(Thr). This is Threonine--tRNA ligase from Legionella pneumophila subsp. pneumophila (strain Philadelphia 1 / ATCC 33152 / DSM 7513).